The following is a 264-amino-acid chain: Small ribosomal subunit protein uS2 (264 aa).

The protein belongs to the universal ribosomal protein uS2 family.

This chain is Small ribosomal subunit protein uS2, found in Helicobacter pylori (strain P12).